The following is a 336-amino-acid chain: MSLIVPENYDPKLSIRETEEAIRYIRETFQDEIGKELNLQRMSAPMFVEQSTGLNDNLNGVEAPVSFTMKDLPGETIEIVHSLAKWKRFALKKYGFGLHEGLYTNMNAIRKDEDLDNFHSIYVDQWDWEKVIAKEERTEATLKATVRQVFKVIKHMEHEVWYKFPQAVYHLPDEIHFVTTQGLEDRWPELSPMEREDKIAKELGCVFVMKIGDKLQRSGEPHDGRAPDYDDWSLNGDIIFWYEPLQTKLEVSSMGIRVDERAMKEQLEKAHATDRAELPFHRDLLAGKMPYTIGGGIGQSRLCMLLLGKAHVGEVQASIWPEEMKEACAKAKIQLL.

This sequence belongs to the class-II aminoacyl-tRNA synthetase family. AsnA subfamily.

It is found in the cytoplasm. It catalyses the reaction L-aspartate + NH4(+) + ATP = L-asparagine + AMP + diphosphate + H(+). Its pathway is amino-acid biosynthesis; L-asparagine biosynthesis; L-asparagine from L-aspartate (ammonia route): step 1/1. This is Aspartate--ammonia ligase from Limosilactobacillus fermentum (strain NBRC 3956 / LMG 18251) (Lactobacillus fermentum).